The chain runs to 138 residues: F-box protein At4g12382 (138 aa).

The F-box domain occupies N7–H53.

The chain is F-box protein At4g12382 from Arabidopsis thaliana (Mouse-ear cress).